The sequence spans 338 residues: CDP-paratose 2-epimerase (338 aa).

Threonine 124 is a substrate binding site. The active-site Proton acceptor is tyrosine 164.

It belongs to the NAD(P)-dependent epimerase/dehydratase family. As to quaternary structure, homotetramer. Requires NAD(+) as cofactor.

The enzyme catalyses CDP-alpha-D-paratose = CDP-3,6-dideoxy-alpha-D-mannose. Its pathway is nucleotide-sugar biosynthesis; CDP-3,6-dideoxy-D-mannose biosynthesis; CDP-3,6-dideoxy-D-mannose from CTP and alpha-D-glucose 1-phosphate: step 5/5. Functionally, catalyzes the isomeration of CDP-paratose to CDP-tyvelose. The protein is CDP-paratose 2-epimerase (rfbE) of Salmonella typhi.